The sequence spans 758 residues: 1-phosphatidylinositol 4,5-bisphosphate phosphodiesterase delta-4 (758 aa).

Residues Gln16–Glu124 form the PH domain. Residues Lys26–Lys53 form a substrate binding region. 3 consecutive EF-hand domains span residues Leu134–Asp169, Met170–Arg205, and Asp206–Glu237. Residues Asp147, Asn149, Asp151, Arg153, Glu158, Asp183, Ser185, Ser187, Thr189, and Glu194 each contribute to the Ca(2+) site. Positions Gln213 to Glu243 match the GBA motif. Positions Gln290 to Lys435 constitute a PI-PLC X-box domain. The active site involves His305. 3 residues coordinate Ca(2+): Asn306, Glu335, and Asp337. His350 is an active-site residue. Position 384 (Glu384) interacts with Ca(2+). 2 residues coordinate substrate: Lys433 and Lys435. Over residues Glu446 to Arg468 the composition is skewed to acidic residues. The disordered stretch occupies residues Glu446–Lys479. One can recognise a PI-PLC Y-box domain in the interval Leu486–Arg602. Positions 515 and 542 each coordinate substrate. Residues Arg602–Ser731 form the C2 domain. The Ca(2+) site is built by Ile645, Asp647, Asn671, Asp700, Tyr701, and Asp702. The PDZ-binding motif lies at His726–Leu729.

It depends on Ca(2+) as a cofactor.

Its subcellular location is the membrane. The protein resides in the nucleus. The protein localises to the cytoplasm. It is found in the endoplasmic reticulum. It carries out the reaction a 1,2-diacyl-sn-glycero-3-phospho-(1D-myo-inositol-4,5-bisphosphate) + H2O = 1D-myo-inositol 1,4,5-trisphosphate + a 1,2-diacyl-sn-glycerol + H(+). The enzyme catalyses a 1,2-diacyl-sn-glycero-3-phospho-(1D-myo-inositol) + H2O = 1D-myo-inositol 1-phosphate + a 1,2-diacyl-sn-glycerol + H(+). Functionally, hydrolyzes the phosphatidylinositol 4,5-bisphosphate (PIP2) to generate 2 second messenger molecules diacylglycerol (DAG) and inositol 1,4,5-trisphosphate (IP3). DAG mediates the activation of protein kinase C (PKC), while IP3 releases Ca(2+) from intracellular stores. The polypeptide is 1-phosphatidylinositol 4,5-bisphosphate phosphodiesterase delta-4 (plcd4) (Xenopus laevis (African clawed frog)).